The sequence spans 77 residues: Exodeoxyribonuclease 7 small subunit (77 aa).

It belongs to the XseB family. Heterooligomer composed of large and small subunits.

The protein localises to the cytoplasm. The catalysed reaction is Exonucleolytic cleavage in either 5'- to 3'- or 3'- to 5'-direction to yield nucleoside 5'-phosphates.. Functionally, bidirectionally degrades single-stranded DNA into large acid-insoluble oligonucleotides, which are then degraded further into small acid-soluble oligonucleotides. The polypeptide is Exodeoxyribonuclease 7 small subunit (Carboxydothermus hydrogenoformans (strain ATCC BAA-161 / DSM 6008 / Z-2901)).